The following is a 552-amino-acid chain: Gamma-aminobutyric acid receptor subunit alpha-4 (552 aa).

The first 35 residues, 1-35, serve as a signal peptide directing secretion; sequence MVSVQKVPAIVLCSGVSLALLHVLCLATCLNESPG. Topologically, residues 36 to 259 are extracellular; it reads QNSKDEKLCP…FHLRRKMGYF (224 aa). N-linked (GlcNAc...) asparagine glycosylation occurs at Asn47. Arg100 is a binding site for 4-aminobutanoate. 2 N-linked (GlcNAc...) asparagine glycosylation sites follow: Asn144 and Asn157. Thr163 contacts 4-aminobutanoate. Cys172 and Cys186 are oxidised to a cystine. A helical transmembrane segment spans residues 260–280; sequence MIQTYIPCIMTVILSQVSFWI. At 281 to 284 the chain is on the cytoplasmic side; the sequence is NKES. The chain crosses the membrane as a helical span at residues 285-305; sequence VPARTVFGITTVLTMTTLSIS. The Extracellular portion of the chain corresponds to 306–318; sequence ARHSLPKVSYATA. Residues 319 to 341 form a helical membrane-spanning segment; that stretch reads MDWFIAVCFAFVFSALIEFAAVN. The Cytoplasmic portion of the chain corresponds to 342 to 515; sequence YFTNIQMQKA…PPPSGSGTSK (174 aa). 3 disordered regions span residues 353–436, 448–470, and 486–513; these read KKIS…NPFS, ARGL…PLRS, and TTVN…GSGT. Over residues 403–423 the composition is skewed to polar residues; sequence RTEVGNHSSKTTAAQESSETT. Composition is skewed to low complexity over residues 448-458 and 486-499; these read ARGLSSAASPS and TTVN…NVSA. Pro residues predominate over residues 500-509; the sequence is TPPPSAPPPS. The chain crosses the membrane as a helical span at residues 516–538; the sequence is IDKYARILFPVTFGAFNMVYWVV. At 539 to 552 the chain is on the extracellular side; that stretch reads YLSKDTMEKSESLM.

Belongs to the ligand-gated ion channel (TC 1.A.9) family. Gamma-aminobutyric acid receptor (TC 1.A.9.5) subfamily. GABRA4 sub-subfamily. In terms of assembly, heteropentamer, formed by a combination of alpha (GABRA1-6), beta (GABRB1-3), gamma (GABRG1-3), delta (GABRD), epsilon (GABRE), rho (GABRR1-3), pi (GABRP) and theta (GABRQ) chains, each subunit exhibiting distinct physiological and pharmacological properties. Expressed in the brain.

It is found in the cell membrane. It localises to the postsynaptic cell membrane. With respect to regulation, potentiated by histamine. Alpha subunit of the heteropentameric ligand-gated chloride channel gated by gamma-aminobutyric acid (GABA), a major inhibitory neurotransmitter in the brain. GABA-gated chloride channels, also named GABA(A) receptors (GABAAR), consist of five subunits arranged around a central pore and contain GABA active binding site(s) located at the alpha and beta subunit interface(s). Alpha-4/GABRA4 subunit often assembles with delta or gamma-2 subunits, in combination with beta subunits. When activated by GABA, GABAARs selectively allow the flow of chloride anions across the cell membrane down their electrochemical gradient. GABAARs containing alpha-4 are predominantly extrasynaptic, contributing to tonic inhibition in dentate granule cells and thalamic relay neurons. Extrasynaptic alpha-4-containing GABAARs control levels of excitability and network activity. GABAAR containing alpha-4-beta-3-delta subunits can simultaneously bind GABA and histamine where histamine binds at the interface of two neighboring beta subunits, which may be involved in the regulation of sleep and wakefulness. This chain is Gamma-aminobutyric acid receptor subunit alpha-4, found in Rattus norvegicus (Rat).